A 475-amino-acid polypeptide reads, in one-letter code: Ribulose bisphosphate carboxylase large chain (475 aa).

Positions Met-1–Ser-2 are excised as a propeptide. Residue Pro-3 is modified to N-acetylproline. Lys-14 is subject to N6,N6,N6-trimethyllysine. Substrate-binding residues include Asn-123 and Thr-173. The active-site Proton acceptor is Lys-175. Lys-177 provides a ligand contact to substrate. Mg(2+) is bound by residues Lys-201, Asp-203, and Glu-204. Lys-201 is modified (N6-carboxylysine). The active-site Proton acceptor is His-294. Substrate-binding residues include Arg-295, His-327, and Ser-379.

Belongs to the RuBisCO large chain family. Type I subfamily. In terms of assembly, heterohexadecamer of 8 large chains and 8 small chains; disulfide-linked. The disulfide link is formed within the large subunit homodimers. Mg(2+) is required as a cofactor. The disulfide bond which can form in the large chain dimeric partners within the hexadecamer appears to be associated with oxidative stress and protein turnover.

It is found in the plastid. It localises to the chloroplast. It carries out the reaction 2 (2R)-3-phosphoglycerate + 2 H(+) = D-ribulose 1,5-bisphosphate + CO2 + H2O. The catalysed reaction is D-ribulose 1,5-bisphosphate + O2 = 2-phosphoglycolate + (2R)-3-phosphoglycerate + 2 H(+). RuBisCO catalyzes two reactions: the carboxylation of D-ribulose 1,5-bisphosphate, the primary event in carbon dioxide fixation, as well as the oxidative fragmentation of the pentose substrate in the photorespiration process. Both reactions occur simultaneously and in competition at the same active site. The chain is Ribulose bisphosphate carboxylase large chain from Plumbago auriculata (Cape leadwort).